The primary structure comprises 244 residues: MLRIVKKLGIILFVSTISINSFAKSMYDDVDSASDYDSTPYYENEGSLVFKMRLGGVVSSAKQKGLPTPTSPQPVSVGEVAKNGYGGDASTTIFFNNYLATELSLGFNVLRTKYTSLAAVAHNYGVDNVKLGKHKPIYMIPATITGQFHIAPYGGIRPYIGIGYHGSYMLTQATGLKIRNGHGAVGQIGVDFYAKDDTLINIDVRQFFLNPKLEYKPNLVGNKTMTSKVKLNPLIVSIGIGFTF.

The N-terminal stretch at 1–23 (MLRIVKKLGIILFVSTISINSFA) is a signal peptide.

Belongs to the OmpW/AlkL family.

The protein resides in the cell outer membrane. This Rickettsia conorii (strain ATCC VR-613 / Malish 7) protein is Putative outer membrane protein RC0105.